Reading from the N-terminus, the 129-residue chain is Small ribosomal subunit protein uS11 (129 aa).

It belongs to the universal ribosomal protein uS11 family. As to quaternary structure, part of the 30S ribosomal subunit. Interacts with proteins S7 and S18. Binds to IF-3.

Functionally, located on the platform of the 30S subunit, it bridges several disparate RNA helices of the 16S rRNA. Forms part of the Shine-Dalgarno cleft in the 70S ribosome. The chain is Small ribosomal subunit protein uS11 from Bradyrhizobium sp. (strain BTAi1 / ATCC BAA-1182).